The chain runs to 39 residues: Potassium channel toxin alpha-KTx 2.2 (39 aa).

Disulfide bonds link C7-C29, C13-C34, and C17-C36. Residues Y37–H39 are interaction with Kv1.3 channels.

Belongs to the short scorpion toxin superfamily. Potassium channel inhibitor family. Alpha-KTx 02 subfamily. Expressed by the venom gland.

The protein resides in the secreted. In terms of biological role, potent inhibitor of voltage-gated potassium channels such as Kv1.1/KCNA1 (IC(50)=0.144 nM), Kv1.2/KCNA2 (IC(50)=0.675 nM), Kv1.3/KCNA3 (IC(50)=0.23 nM) and Shaker (Kd=160 nM). Suppresses expression of the Kv1.3/KCNA3 channel in lipopolysaccharide (LPS)-stimulated mouse macrophages. Down-regulates secretion of nitric oxide (NO) and inflammatory cytokines, such as TNF-alpha/TNF, IL-1beta/IL1B and IL6, in LPS-stimulated mouse macrophages in a manner dependent on Kv1.3/KCNA3 channel blockage. Reduces activation of MAPK and NF-kappa-B signaling pathways in LPS-stimulated mouse macrophages. Modulates intracellular Ca(2+) signaling in human PMA/ionomycin-triggered T-cells. Interferes with the activation of the MAPK, NF-kappa-B and NFATc1 pathways in human PMA/ionomycin-triggered T-cells. Reduces proliferation of human PMA/ionomycin-triggered T-cells. Down-regulates secretion of cytokines, such as TNF-alpha/TNF and IL2, in human PMA/ionomycin-triggered T-cells. In Centruroides margaritatus (Central American bark Scorpion), this protein is Potassium channel toxin alpha-KTx 2.2.